The following is a 534-amino-acid chain: Beta-1,2-xylosyltransferase (534 aa).

The Cytoplasmic segment spans residues 1–11 (MSKRNPKILKI). Residues 12-34 (FLYMLLLNSLFLIIYFVFHSSSF) traverse the membrane as a helical; Signal-anchor for type II membrane protein segment. Over 35-534 (SPEQSQPPHI…LTEIMKSLGC (500 aa)) the chain is Lumenal. Residues N51, N301, and N479 are each glycosylated (N-linked (GlcNAc...) asparagine).

Post-translationally, glycosylation at least at one of the two sites Asn-51 and Asn-301 is necessary for enzyme stability and activity.

The protein localises to the golgi apparatus membrane. The enzyme catalyses N(4)-{beta-D-GlcNAc-(1-&gt;2)-alpha-D-Man-(1-&gt;3)-[beta-D-GlcNAc-(1-&gt;2)-alpha-D-Man-(1-&gt;6)]-beta-D-Man-(1-&gt;4)-beta-D-GlcNAc-(1-&gt;4)-beta-D-GlcNAc}-L-asparaginyl-[protein] + UDP-alpha-D-xylose = N(4)-{beta-D-GlcNAc-(1-&gt;2)-alpha-D-Man-(1-&gt;3)-[beta-D-GlcNAc-(1-&gt;2)-alpha-D-Man-(1-&gt;6)]-[beta-D-Xyl-(1-&gt;2)]-beta-D-Man-(1-&gt;4)-beta-D-GlcNAc-(1-&gt;4)-beta-D-GlcNAc}-L-asparaginyl-[protein] + UDP + H(+). The protein operates within protein modification; protein glycosylation. Functionally, glycosyltransferase involved in the xylosylation of N-glycans. Possesses beta-1,2-xylosyltransferase activity, transferring xylose from UDP-xylose to the core beta-linked mannose of N-glycans. Involved in the biosynthesis of glycoprotein bound N-glycans. Does not require metal ions for its activity. This is Beta-1,2-xylosyltransferase from Arabidopsis thaliana (Mouse-ear cress).